The following is a 343-amino-acid chain: tRNA-splicing endonuclease (343 aa).

Catalysis depends on residues Y277, H288, and K319.

The protein belongs to the tRNA-intron endonuclease family. Archaeal long subfamily. In terms of assembly, homodimer.

It carries out the reaction pretRNA = a 3'-half-tRNA molecule with a 5'-OH end + a 5'-half-tRNA molecule with a 2',3'-cyclic phosphate end + an intron with a 2',3'-cyclic phosphate and a 5'-hydroxyl terminus.. In terms of biological role, endonuclease that removes tRNA introns. Cleaves pre-tRNA at the 5' and 3' splice sites to release the intron. The products are an intron and two tRNA half-molecules bearing 2',3' cyclic phosphate and 5'-OH termini. Recognizes a pseudosymmetric substrate in which 2 bulged loops of 3 bases are separated by a stem of 4 bp. The chain is tRNA-splicing endonuclease from Halobacterium salinarum (strain ATCC 29341 / DSM 671 / R1).